We begin with the raw amino-acid sequence, 215 residues long: Nascent polypeptide-associated complex subunit alpha (215 aa).

The tract at residues 1–81 (MPGEATETVP…SEKKARKAMS (81 aa)) is disordered. Polar residues predominate over residues 9–21 (VPVTEQEMQQPQV). Acidic residues predominate over residues 29-42 (SDSDDSVPELEEQD). Over residues 43–57 (SAQTQTQQAQLAAAA) the composition is skewed to low complexity. In terms of domain architecture, NAC-A/B spans 70 to 135 (SRSEKKARKA…AKIEDLSQQA (66 aa)). The UBA domain occupies 176–213 (VEVKDIELVMSQANVSRAKAVRALKNNNNDIVNAIMEL).

Belongs to the NAC-alpha family.

Its function is as follows. May promote appropriate targeting of ribosome-nascent polypeptide complexes. The polypeptide is Nascent polypeptide-associated complex subunit alpha (naca) (Oreochromis niloticus (Nile tilapia)).